Here is a 205-residue protein sequence, read N- to C-terminus: CASP-like protein 0U1 (205 aa).

Topologically, residues 1-66 (MSGGDIDPTA…GYHKFAVFQF (66 aa)) are cytoplasmic. The region spanning 10 to 162 (AINSPKFRLI…SMMFTWKEWR (153 aa)) is the MARVEL domain. Residues 67–87 (LVVICVTYWLFTMLWMGMYLI) traverse the membrane as a helical segment. The Extracellular portion of the chain corresponds to 88–90 (QKV). The helical transmembrane segment at 91-111 (PPAGTEFMIYAVFNVLILIAF) threads the bilayer. Residues 112-137 (STSWTECNETIVDPTYPVCKRATGAK) lie on the Cytoplasmic side of the membrane. A helical transmembrane segment spans residues 138–158 (ASIAFAMFTWLALCVSMMFTW). Residues 159–167 (KEWRDQNYE) lie on the Extracellular side of the membrane. The helical transmembrane segment at 168–188 (GLPIFGDFSSFMPGGGGGGMG) threads the bilayer. Residues 189–205 (GGGGYERPSDVNTQTYA) are Cytoplasmic-facing.

The protein belongs to the Casparian strip membrane proteins (CASP) family. Homodimer and heterodimers.

The protein localises to the cell membrane. This is CASP-like protein 0U1 from Micromonas pusilla (strain CCMP1545) (Picoplanktonic green alga).